The sequence spans 863 residues: Aminopeptidase N (863 aa).

Substrate is bound by residues E124 and 263-267 (GAMEN). Residue H299 participates in Zn(2+) binding. E300 (proton acceptor) is an active-site residue. Residues H303 and E322 each contribute to the Zn(2+) site.

Belongs to the peptidase M1 family. Zn(2+) is required as a cofactor.

It carries out the reaction Release of an N-terminal amino acid, Xaa-|-Yaa- from a peptide, amide or arylamide. Xaa is preferably Ala, but may be most amino acids including Pro (slow action). When a terminal hydrophobic residue is followed by a prolyl residue, the two may be released as an intact Xaa-Pro dipeptide.. Aminopeptidase N is involved in the degradation of intracellular peptides generated by protein breakdown during normal growth as well as in response to nutrient starvation. The polypeptide is Aminopeptidase N (pepN) (Caulobacter vibrioides (strain ATCC 19089 / CIP 103742 / CB 15) (Caulobacter crescentus)).